Consider the following 320-residue polypeptide: MNSRRSPLLVFSGQSNRPLAQAICDNLGVPLGRSRTEKFTNDNLIVHYEESLREGDVFIVQTFSTPVSDAIMELMLMIDAAKSASAGRVTAVIPYYSYARSDKKDSPRISIAGRLVADLLQEAGADRVLTMTLHSPQVHGFFKVPVDHLSADVVLSQHFKKCVPDAHNGVVLAPDAGSIKRASQIARRLDSGLAMIDKERLSDTEVRPRALIGDVDGKTVFIVDDEISTAGSLVETVSIARSMGAKDVYVAVTHGVYSGPAIERIAALDVTQVASCNTVLVPQDKLDRAGGKLAVLDVAPLFASAIANIHTGASVSTLFT.

Position 41–43 (41–43 (NDN)) interacts with ATP. Mg(2+)-binding residues include His-134 and Asp-175. Lys-198 is an active-site residue. Positions 200 and 224 each coordinate D-ribose 5-phosphate.

Belongs to the ribose-phosphate pyrophosphokinase family. Class I subfamily. Homohexamer. Requires Mg(2+) as cofactor.

Its subcellular location is the cytoplasm. It catalyses the reaction D-ribose 5-phosphate + ATP = 5-phospho-alpha-D-ribose 1-diphosphate + AMP + H(+). Its pathway is metabolic intermediate biosynthesis; 5-phospho-alpha-D-ribose 1-diphosphate biosynthesis; 5-phospho-alpha-D-ribose 1-diphosphate from D-ribose 5-phosphate (route I): step 1/1. In terms of biological role, involved in the biosynthesis of the central metabolite phospho-alpha-D-ribosyl-1-pyrophosphate (PRPP) via the transfer of pyrophosphoryl group from ATP to 1-hydroxyl of ribose-5-phosphate (Rib-5-P). This chain is Ribose-phosphate pyrophosphokinase, found in Deinococcus radiodurans (strain ATCC 13939 / DSM 20539 / JCM 16871 / CCUG 27074 / LMG 4051 / NBRC 15346 / NCIMB 9279 / VKM B-1422 / R1).